Here is a 547-residue protein sequence, read N- to C-terminus: GMP synthase [glutamine-hydrolyzing] (547 aa).

The Glutamine amidotransferase type-1 domain occupies 12 to 210 (KILILDFGSQ…VLDIAGAKPD (199 aa)). Catalysis depends on cysteine 89, which acts as the Nucleophile. Catalysis depends on residues histidine 184 and glutamate 186. Residues 211–403 (WIMRDHIEEA…LGLPAEMVYR (193 aa)) form the GMPS ATP-PPase domain. 238–244 (SGGVDSS) contributes to the ATP binding site.

In terms of assembly, homodimer.

The enzyme catalyses XMP + L-glutamine + ATP + H2O = GMP + L-glutamate + AMP + diphosphate + 2 H(+). The protein operates within purine metabolism; GMP biosynthesis; GMP from XMP (L-Gln route): step 1/1. Catalyzes the synthesis of GMP from XMP. This chain is GMP synthase [glutamine-hydrolyzing], found in Burkholderia pseudomallei (strain 1710b).